Reading from the N-terminus, the 493-residue chain is Glycerol kinase (493 aa).

Threonine 13 contributes to the ADP binding site. Positions 13, 14, and 15 each coordinate ATP. Threonine 13 contacts sn-glycerol 3-phosphate. Residue arginine 17 participates in ADP binding. Residues arginine 83, glutamate 84, tyrosine 135, and aspartate 244 each contribute to the sn-glycerol 3-phosphate site. Residues arginine 83, glutamate 84, tyrosine 135, aspartate 244, and glutamine 245 each contribute to the glycerol site. Residues threonine 266 and glycine 309 each coordinate ADP. 4 residues coordinate ATP: threonine 266, glycine 309, glutamine 313, and glycine 410. ADP contacts are provided by glycine 410 and asparagine 414.

This sequence belongs to the FGGY kinase family.

The enzyme catalyses glycerol + ATP = sn-glycerol 3-phosphate + ADP + H(+). It functions in the pathway polyol metabolism; glycerol degradation via glycerol kinase pathway; sn-glycerol 3-phosphate from glycerol: step 1/1. With respect to regulation, inhibited by fructose 1,6-bisphosphate (FBP). Its function is as follows. Key enzyme in the regulation of glycerol uptake and metabolism. Catalyzes the phosphorylation of glycerol to yield sn-glycerol 3-phosphate. In Shewanella halifaxensis (strain HAW-EB4), this protein is Glycerol kinase.